The chain runs to 129 residues: Protein Wnt-6 (129 aa).

Cystine bridges form between cysteine 3–cysteine 17, cysteine 5–cysteine 12, cysteine 75–cysteine 106, cysteine 91–cysteine 101, and cysteine 128–cysteine 129. Residue serine 9 is the site of O-palmitoleoyl serine; by PORCN attachment. Asparagine 92 carries an N-linked (GlcNAc...) asparagine glycan.

The protein belongs to the Wnt family. Palmitoleoylation is required for efficient binding to frizzled receptors. Depalmitoleoylation leads to Wnt signaling pathway inhibition. In terms of tissue distribution, at tailbud: dorsal, punctate; in adult: brain and heart.

It is found in the secreted. Its subcellular location is the extracellular space. The protein localises to the extracellular matrix. Functionally, ligand for members of the frizzled family of seven transmembrane receptors. Probable developmental protein. May be a signaling molecule which affects the development of discrete regions of tissues. Is likely to signal over only few cell diameters. The sequence is that of Protein Wnt-6 (wnt6) from Xenopus laevis (African clawed frog).